A 317-amino-acid polypeptide reads, in one-letter code: UV DNA damage endonuclease (317 aa).

The protein belongs to the uve1/UvsE family.

Component in a DNA repair pathway. Removal of UV LIGHT damaged nucleotides. Recognizes pyrimidine dimers and cleave a phosphodiester bond immediately 5' to the lesion. This chain is UV DNA damage endonuclease, found in Bacillus cereus (strain G9842).